The following is a 296-amino-acid chain: Class E basic helix-loop-helix protein 22 (296 aa).

The segment at 26–70 (SAFRPPQGLDLSQPGDRSPLHCYDGPDPSDLLRHHQHHHQASSGA) is disordered. The bHLH domain maps to 153–207 (TLRLNINARERRRMHDLNDALDELRAVIPYAHSPSVRKLSKIATLLLAKNYILMQ).

The protein resides in the nucleus. Functionally, may act as a transcriptional repressor. The chain is Class E basic helix-loop-helix protein 22 (bhlhe22) from Xenopus tropicalis (Western clawed frog).